The chain runs to 177 residues: ATP synthase subunit delta (177 aa).

The protein belongs to the ATPase delta chain family. In terms of assembly, F-type ATPases have 2 components, F(1) - the catalytic core - and F(0) - the membrane proton channel. F(1) has five subunits: alpha(3), beta(3), gamma(1), delta(1), epsilon(1). F(0) has three main subunits: a(1), b(2) and c(10-14). The alpha and beta chains form an alternating ring which encloses part of the gamma chain. F(1) is attached to F(0) by a central stalk formed by the gamma and epsilon chains, while a peripheral stalk is formed by the delta and b chains.

It is found in the cell inner membrane. Functionally, f(1)F(0) ATP synthase produces ATP from ADP in the presence of a proton or sodium gradient. F-type ATPases consist of two structural domains, F(1) containing the extramembraneous catalytic core and F(0) containing the membrane proton channel, linked together by a central stalk and a peripheral stalk. During catalysis, ATP synthesis in the catalytic domain of F(1) is coupled via a rotary mechanism of the central stalk subunits to proton translocation. Its function is as follows. This protein is part of the stalk that links CF(0) to CF(1). It either transmits conformational changes from CF(0) to CF(1) or is implicated in proton conduction. The sequence is that of ATP synthase subunit delta from Serratia proteamaculans (strain 568).